A 487-amino-acid polypeptide reads, in one-letter code: Probable peptidoglycan glycosyltransferase FtsW (487 aa).

9 helical membrane-spanning segments follow: residues 30-50, 71-91, 93-113, 122-142, 167-187, 203-223, 282-302, 332-352, and 358-378; these read VSLILLALSLMAIGLVIVTSA, IYIVLAIGAALTVMQIPMQWW, TSNAWLLLLGLVLLIAVLLVG, WLAIGPITIQAAEPAKLFFFC, VVFFAFAVLLLLQPDLGTVVV, LWQFFGLAFTGGAAVTFLIMF, FIMAILAEELGFAGVLTVLAL, IGIWFSFQTAVNVGASAGILP, and FPLLSYGGSSLIIMAAAVGLL. 2 disordered regions span residues 398–419 and 444–487; these read KAKASTSSSRKNKPKTASSAGK and IDSI…DGYV. Polar residues predominate over residues 401 to 416; that stretch reads ASTSSSRKNKPKTASS. The segment covering 444 to 453 has biased composition (acidic residues); the sequence is IDSIMDDFAQ.

This sequence belongs to the SEDS family. FtsW subfamily.

It localises to the cell inner membrane. The catalysed reaction is [GlcNAc-(1-&gt;4)-Mur2Ac(oyl-L-Ala-gamma-D-Glu-L-Lys-D-Ala-D-Ala)](n)-di-trans,octa-cis-undecaprenyl diphosphate + beta-D-GlcNAc-(1-&gt;4)-Mur2Ac(oyl-L-Ala-gamma-D-Glu-L-Lys-D-Ala-D-Ala)-di-trans,octa-cis-undecaprenyl diphosphate = [GlcNAc-(1-&gt;4)-Mur2Ac(oyl-L-Ala-gamma-D-Glu-L-Lys-D-Ala-D-Ala)](n+1)-di-trans,octa-cis-undecaprenyl diphosphate + di-trans,octa-cis-undecaprenyl diphosphate + H(+). It participates in cell wall biogenesis; peptidoglycan biosynthesis. In terms of biological role, peptidoglycan polymerase that is essential for cell division. The polypeptide is Probable peptidoglycan glycosyltransferase FtsW (Pseudoalteromonas atlantica (strain T6c / ATCC BAA-1087)).